The following is a 609-amino-acid chain: N-acetyltransferase ESCO2 (609 aa).

Disordered regions lie at residues 1 to 71 (MLSR…RVSP), 100 to 165 (EAKS…TDQV), 197 to 241 (KKPT…SPVR), and 314 to 357 (PDHD…LTAT). Composition is skewed to polar residues over residues 13 to 22 (AESNPSKKQI) and 41 to 54 (ISLN…STPK). The span at 126–135 (PAKKVQKKPR) shows a compositional bias: basic residues. The segment covering 214–230 (PTYEKPSIRKPVREKEL) has biased composition (basic and acidic residues). The span at 345-355 (PLNSSTPSALT) shows a compositional bias: polar residues. The CCHH-type zinc-finger motif lies at 392 to 416 (TTCASCGMLYSTDSPEDNFQHTQFH).

This sequence belongs to the acetyltransferase family. ECO subfamily.

It localises to the nucleus. It is found in the chromosome. The enzyme catalyses L-lysyl-[protein] + acetyl-CoA = N(6)-acetyl-L-lysyl-[protein] + CoA + H(+). In terms of biological role, acetyltransferase required for the establishment of sister chromatid cohesion. Couples the processes of cohesion and DNA replication to ensure that only sister chromatids become paired together. Essential for early development. The protein is N-acetyltransferase ESCO2 (esco2) of Danio rerio (Zebrafish).